We begin with the raw amino-acid sequence, 376 residues long: Queuine tRNA-ribosyltransferase (376 aa).

Aspartate 93 acts as the Proton acceptor in catalysis. Residues 93-97 (DSGGF), aspartate 147, glutamine 190, and glycine 217 contribute to the substrate site. The tract at residues 248-254 (GVGKPDD) is RNA binding. The active-site Nucleophile is aspartate 267. Zn(2+) is bound by residues cysteine 305, cysteine 307, cysteine 310, and histidine 336.

It belongs to the queuine tRNA-ribosyltransferase family. Homodimer. Within each dimer, one monomer is responsible for RNA recognition and catalysis, while the other monomer binds to the replacement base PreQ1. Zn(2+) is required as a cofactor.

The enzyme catalyses 7-aminomethyl-7-carbaguanine + guanosine(34) in tRNA = 7-aminomethyl-7-carbaguanosine(34) in tRNA + guanine. Its pathway is tRNA modification; tRNA-queuosine biosynthesis. Catalyzes the base-exchange of a guanine (G) residue with the queuine precursor 7-aminomethyl-7-deazaguanine (PreQ1) at position 34 (anticodon wobble position) in tRNAs with GU(N) anticodons (tRNA-Asp, -Asn, -His and -Tyr). Catalysis occurs through a double-displacement mechanism. The nucleophile active site attacks the C1' of nucleotide 34 to detach the guanine base from the RNA, forming a covalent enzyme-RNA intermediate. The proton acceptor active site deprotonates the incoming PreQ1, allowing a nucleophilic attack on the C1' of the ribose to form the product. After dissociation, two additional enzymatic reactions on the tRNA convert PreQ1 to queuine (Q), resulting in the hypermodified nucleoside queuosine (7-(((4,5-cis-dihydroxy-2-cyclopenten-1-yl)amino)methyl)-7-deazaguanosine). The sequence is that of Queuine tRNA-ribosyltransferase from Ruegeria pomeroyi (strain ATCC 700808 / DSM 15171 / DSS-3) (Silicibacter pomeroyi).